The following is a 622-amino-acid chain: Coiled-coil domain-containing protein 17 (622 aa).

Coiled-coil stretches lie at residues 81–102, 146–207, and 294–320; these read RSAL…QEMR, ARRV…LEVL, and GELP…RGRA. Disordered stretches follow at residues 334–356 and 584–622; these read SLQP…PLPP and PAVG…PVSF. Over residues 344 to 356 the composition is skewed to pro residues; the sequence is PLLPPPVAPPLPP. Residues 593 to 615 show a composition bias toward basic and acidic residues; that stretch reads PRTEEPLSGVKDRDEGLGPHHSS.

The protein is Coiled-coil domain-containing protein 17 (CCDC17) of Homo sapiens (Human).